The primary structure comprises 125 residues: Large ribosomal subunit protein eL22 (125 aa).

This sequence belongs to the eukaryotic ribosomal protein eL22 family. Component of the large ribosomal subunit.

It is found in the cytoplasm. In terms of biological role, component of the large ribosomal subunit. The ribosome is a large ribonucleoprotein complex responsible for the synthesis of proteins in the cell. The polypeptide is Large ribosomal subunit protein eL22 (rpl22) (Gadus morhua (Atlantic cod)).